A 305-amino-acid polypeptide reads, in one-letter code: Dihydroorotate dehydrogenase A (fumarate) (305 aa).

Residues Ser21 and 45-46 (KS) contribute to the FMN site. Residues Lys45, 69 to 73 (NAIGL), and Asn129 contribute to the substrate site. Asn129 is a binding site for FMN. The Nucleophile role is filled by Cys132. Residues Lys167 and Ile193 each coordinate FMN. Position 194–195 (194–195 (NT)) interacts with substrate. FMN is bound by residues Gly219 and 245 to 246 (GG).

It belongs to the dihydroorotate dehydrogenase family. Type 1 subfamily. As to quaternary structure, homodimer. FMN is required as a cofactor.

The protein resides in the cytoplasm. It carries out the reaction (S)-dihydroorotate + fumarate = orotate + succinate. It participates in pyrimidine metabolism; UMP biosynthesis via de novo pathway. Its function is as follows. Catalyzes the conversion of dihydroorotate to orotate with fumarate as the electron acceptor. The chain is Dihydroorotate dehydrogenase A (fumarate) (pyrD) from Lactiplantibacillus plantarum (strain ATCC BAA-793 / NCIMB 8826 / WCFS1) (Lactobacillus plantarum).